Consider the following 289-residue polypeptide: Nitrogenase iron protein (289 aa).

8–15 (GKGGIGKS) is a binding site for ATP. C96 contacts [4Fe-4S] cluster. The residue at position 99 (R99) is an ADP-ribosylarginine; by dinitrogenase reductase ADP-ribosyltransferase. C130 contacts [4Fe-4S] cluster.

It belongs to the NifH/BchL/ChlL family. In terms of assembly, homodimer. Requires [4Fe-4S] cluster as cofactor. The reversible ADP-ribosylation of Arg-99 inactivates the nitrogenase reductase and regulates nitrogenase activity.

It carries out the reaction N2 + 8 reduced [2Fe-2S]-[ferredoxin] + 16 ATP + 16 H2O = H2 + 8 oxidized [2Fe-2S]-[ferredoxin] + 2 NH4(+) + 16 ADP + 16 phosphate + 6 H(+). The key enzymatic reactions in nitrogen fixation are catalyzed by the nitrogenase complex, which has 2 components: the iron protein and the molybdenum-iron protein. This is Nitrogenase iron protein from Parafrankia sp. (strain EAN1pec).